A 358-amino-acid polypeptide reads, in one-letter code: Peptide chain release factor 1 (358 aa).

Glutamine 233 carries the post-translational modification N5-methylglutamine.

The protein belongs to the prokaryotic/mitochondrial release factor family. In terms of processing, methylated by PrmC. Methylation increases the termination efficiency of RF1.

It is found in the cytoplasm. Functionally, peptide chain release factor 1 directs the termination of translation in response to the peptide chain termination codons UAG and UAA. The protein is Peptide chain release factor 1 of Clostridium botulinum (strain ATCC 19397 / Type A).